Reading from the N-terminus, the 74-residue chain is ATP synthase subunit c (74 aa).

Helical transmembrane passes span 9–29 and 51–71; these read IAIA…ASIF and LIGA…AILL.

It belongs to the ATPase C chain family. In terms of assembly, F-type ATPases have 2 components, F(1) - the catalytic core - and F(0) - the membrane proton channel. F(1) has five subunits: alpha(3), beta(3), gamma(1), delta(1), epsilon(1). F(0) has three main subunits: a(1), b(2) and c(10-14). The alpha and beta chains form an alternating ring which encloses part of the gamma chain. F(1) is attached to F(0) by a central stalk formed by the gamma and epsilon chains, while a peripheral stalk is formed by the delta and b chains.

Its subcellular location is the cell inner membrane. In terms of biological role, f(1)F(0) ATP synthase produces ATP from ADP in the presence of a proton or sodium gradient. F-type ATPases consist of two structural domains, F(1) containing the extramembraneous catalytic core and F(0) containing the membrane proton channel, linked together by a central stalk and a peripheral stalk. During catalysis, ATP synthesis in the catalytic domain of F(1) is coupled via a rotary mechanism of the central stalk subunits to proton translocation. Key component of the F(0) channel; it plays a direct role in translocation across the membrane. A homomeric c-ring of between 10-14 subunits forms the central stalk rotor element with the F(1) delta and epsilon subunits. The sequence is that of ATP synthase subunit c from Orientia tsutsugamushi (strain Ikeda) (Rickettsia tsutsugamushi).